The chain runs to 978 residues: Regulator of telomere elongation helicase 1 homolog (978 aa).

In terms of domain architecture, Helicase ATP-binding spans 7–318 (NGIPVNFPFE…EDDDAKKDFT (312 aa)). Position 42–49 (42–49 (SPTGTGKT)) interacts with ATP. 4 residues coordinate [4Fe-4S] cluster: Cys-159, Cys-177, Cys-186, and Cys-222. The DEAH box signature appears at 265–268 (DEAH).

Belongs to the helicase family. RAD3/XPD subfamily.

It is found in the nucleus. It catalyses the reaction ATP + H2O = ADP + phosphate + H(+). A probable ATP-dependent DNA helicase implicated in DNA repair and the maintenance of genomic stability. Acts as an anti-recombinase to counteract toxic recombination and limit crossover during meiosis. Regulates meiotic recombination and crossover homeostasis by physically dissociating strand invasion events and thereby promotes noncrossover repair by meiotic synthesis dependent strand annealing (SDSA) as well as disassembly of D loop recombination intermediates. The protein is Regulator of telomere elongation helicase 1 homolog of Culex quinquefasciatus (Southern house mosquito).